Reading from the N-terminus, the 493-residue chain is 6-aminohexanoate-cyclic-dimer hydrolase (493 aa).

Catalysis depends on charge relay system residues Lys72 and Ser150. Ser174 acts as the Acyl-ester intermediate in catalysis.

It belongs to the amidase family. In terms of assembly, homodimer.

It catalyses the reaction 1,8-diazacyclotetradecane-2,9-dione + H2O = N-(6-aminohexanoyl)-6-aminohexanoate. Its pathway is xenobiotic degradation; nylon-6 oligomer degradation. Its function is as follows. Catalyzes the hydrolysis of 6-aminohexanoic acid cyclic dimer (1,8-diazacyclotetradecane-2,9-dione) to form the linear dimer 6-aminohexanoyl-6-aminohexanoic acid. This Pseudomonas sp. (strain NK87) protein is 6-aminohexanoate-cyclic-dimer hydrolase (nylA).